Reading from the N-terminus, the 409-residue chain is Arginine deiminase (409 aa).

The active-site Amidino-cysteine intermediate is Cys-399.

This sequence belongs to the arginine deiminase family.

The protein resides in the cytoplasm. The enzyme catalyses L-arginine + H2O = L-citrulline + NH4(+). The protein operates within amino-acid degradation; L-arginine degradation via ADI pathway; carbamoyl phosphate from L-arginine: step 1/2. The polypeptide is Arginine deiminase (Borrelia duttonii (strain Ly)).